The following is a 431-amino-acid chain: Adenylosuccinate synthetase (431 aa).

GTP-binding positions include 12–18 (GDEGKGK) and 40–42 (GHT). The active-site Proton acceptor is the aspartate 13. Mg(2+) is bound by residues aspartate 13 and glycine 40. IMP contacts are provided by residues 13-16 (DEGK), 38-41 (NAGH), threonine 128, arginine 142, glutamine 225, threonine 240, and arginine 304. Histidine 41 functions as the Proton donor in the catalytic mechanism. 300–306 (TTTGRPR) provides a ligand contact to substrate. GTP contacts are provided by residues arginine 306, 332–334 (KLD), and 414–416 (GVG).

Belongs to the adenylosuccinate synthetase family. In terms of assembly, homodimer. The cofactor is Mg(2+).

The protein resides in the cytoplasm. The enzyme catalyses IMP + L-aspartate + GTP = N(6)-(1,2-dicarboxyethyl)-AMP + GDP + phosphate + 2 H(+). It participates in purine metabolism; AMP biosynthesis via de novo pathway; AMP from IMP: step 1/2. Its function is as follows. Plays an important role in the de novo pathway of purine nucleotide biosynthesis. Catalyzes the first committed step in the biosynthesis of AMP from IMP. The chain is Adenylosuccinate synthetase from Thermomicrobium roseum (strain ATCC 27502 / DSM 5159 / P-2).